The following is a 295-amino-acid chain: Protoheme IX farnesyltransferase (295 aa).

9 consecutive transmembrane segments (helical) span residues isoleucine 24–isoleucine 43, leucine 47–tyrosine 69, serine 94–valine 114, isoleucine 117–leucine 137, asparagine 144–threonine 164, glycine 171–leucine 191, lysine 216–leucine 236, phenylalanine 241–methionine 261, and methionine 272–isoleucine 292.

This sequence belongs to the UbiA prenyltransferase family. Protoheme IX farnesyltransferase subfamily.

Its subcellular location is the cell membrane. It catalyses the reaction heme b + (2E,6E)-farnesyl diphosphate + H2O = Fe(II)-heme o + diphosphate. It participates in porphyrin-containing compound metabolism; heme O biosynthesis; heme O from protoheme: step 1/1. Functionally, converts heme B (protoheme IX) to heme O by substitution of the vinyl group on carbon 2 of heme B porphyrin ring with a hydroxyethyl farnesyl side group. The polypeptide is Protoheme IX farnesyltransferase (Wolbachia sp. subsp. Brugia malayi (strain TRS)).